The following is a 359-amino-acid chain: DNA polymerase IV (359 aa).

The region spanning isoleucine 7–glycine 188 is the UmuC domain. Mg(2+) is bound by residues aspartate 11 and aspartate 106. Residue glutamate 107 is part of the active site.

The protein belongs to the DNA polymerase type-Y family. As to quaternary structure, monomer. Mg(2+) is required as a cofactor.

The protein localises to the cytoplasm. The enzyme catalyses DNA(n) + a 2'-deoxyribonucleoside 5'-triphosphate = DNA(n+1) + diphosphate. In terms of biological role, poorly processive, error-prone DNA polymerase involved in untargeted mutagenesis. Copies undamaged DNA at stalled replication forks, which arise in vivo from mismatched or misaligned primer ends. These misaligned primers can be extended by PolIV. Exhibits no 3'-5' exonuclease (proofreading) activity. May be involved in translesional synthesis, in conjunction with the beta clamp from PolIII. This chain is DNA polymerase IV, found in Clostridium perfringens (strain 13 / Type A).